The primary structure comprises 233 residues: Phosphatidylserine decarboxylase proenzyme (233 aa).

S190 (schiff-base intermediate with substrate; via pyruvic acid) is an active-site residue. The residue at position 190 (S190) is a Pyruvic acid (Ser); by autocatalysis.

Belongs to the phosphatidylserine decarboxylase family. PSD-A subfamily. As to quaternary structure, heterodimer of a large membrane-associated beta subunit and a small pyruvoyl-containing alpha subunit. The cofactor is pyruvate. In terms of processing, is synthesized initially as an inactive proenzyme. Formation of the active enzyme involves a self-maturation process in which the active site pyruvoyl group is generated from an internal serine residue via an autocatalytic post-translational modification. Two non-identical subunits are generated from the proenzyme in this reaction, and the pyruvate is formed at the N-terminus of the alpha chain, which is derived from the carboxyl end of the proenzyme. The post-translation cleavage follows an unusual pathway, termed non-hydrolytic serinolysis, in which the side chain hydroxyl group of the serine supplies its oxygen atom to form the C-terminus of the beta chain, while the remainder of the serine residue undergoes an oxidative deamination to produce ammonia and the pyruvoyl prosthetic group on the alpha chain.

The protein localises to the cell membrane. It carries out the reaction a 1,2-diacyl-sn-glycero-3-phospho-L-serine + H(+) = a 1,2-diacyl-sn-glycero-3-phosphoethanolamine + CO2. The protein operates within phospholipid metabolism; phosphatidylethanolamine biosynthesis; phosphatidylethanolamine from CDP-diacylglycerol: step 2/2. Catalyzes the formation of phosphatidylethanolamine (PtdEtn) from phosphatidylserine (PtdSer). This Bartonella quintana (strain Toulouse) (Rochalimaea quintana) protein is Phosphatidylserine decarboxylase proenzyme.